Consider the following 307-residue polypeptide: Dihydroorotate dehydrogenase B (NAD(+)), catalytic subunit (307 aa).

FMN is bound by residues Ser-21 and 45-46; that span reads KA. Residues Lys-45 and 69 to 73 contribute to the substrate site; that span reads NAIGL. The FMN site is built by Asn-101 and Asn-129. Asn-129 contributes to the substrate binding site. Cys-132 functions as the Nucleophile in the catalytic mechanism. FMN-binding residues include Lys-167 and Ile-193. 194–195 contributes to the substrate binding site; it reads NT. FMN contacts are provided by residues Gly-219, 245–246, and 267–268; these read GG and GT.

Belongs to the dihydroorotate dehydrogenase family. Type 1 subfamily. As to quaternary structure, heterotetramer of 2 PyrK and 2 PyrD type B subunits. FMN serves as cofactor.

It localises to the cytoplasm. The catalysed reaction is (S)-dihydroorotate + NAD(+) = orotate + NADH + H(+). The protein operates within pyrimidine metabolism; UMP biosynthesis via de novo pathway; orotate from (S)-dihydroorotate (NAD(+) route): step 1/1. Catalyzes the conversion of dihydroorotate to orotate with NAD(+) as electron acceptor. This is Dihydroorotate dehydrogenase B (NAD(+)), catalytic subunit (pyrD) from Cutibacterium acnes (strain DSM 16379 / KPA171202) (Propionibacterium acnes).